Consider the following 319-residue polypeptide: Cytochrome c biogenesis protein CcsA (319 aa).

7 helical membrane-spanning segments follow: residues 9 to 29 (ILTHISFSLVSIGITIFLITL), 44 to 64 (GVIGTFLCITGLLVTRWAYSG), 71 to 91 (LYESLLFLSWSFAIIHMFPYL), 143 to 163 (MVLGYAALLCGSLLSVALLVI), 225 to 245 (IISLGFIFLTIGILSGAVWAN), 259 to 273 (TWAFITWTMFAIYLH), and 286 to 306 (AIVAFLGFIIIWICYFGVNLL).

It belongs to the CcmF/CycK/Ccl1/NrfE/CcsA family. May interact with Ccs1.

The protein resides in the plastid. The protein localises to the chloroplast thylakoid membrane. In terms of biological role, required during biogenesis of c-type cytochromes (cytochrome c6 and cytochrome f) at the step of heme attachment. This is Cytochrome c biogenesis protein CcsA from Oenothera parviflora (Small-flowered evening primrose).